The chain runs to 20 residues: Dihydrolipoamide-residue succinyltransferase component of 2-oxoglutarate dehydrogenase complex (20 aa).

The protein belongs to the 2-oxoacid dehydrogenase family. Forms a 24-polypeptide structural core with octahedral symmetry. The cofactor is (R)-lipoate.

Its subcellular location is the mitochondrion membrane. The enzyme catalyses N(6)-[(R)-dihydrolipoyl]-L-lysyl-[protein] + succinyl-CoA = N(6)-[(R)-S(8)-succinyldihydrolipoyl]-L-lysyl-[protein] + CoA. It participates in amino-acid degradation; L-lysine degradation via saccharopine pathway; glutaryl-CoA from L-lysine: step 6/6. In terms of biological role, the 2-oxoglutarate dehydrogenase complex catalyzes the overall conversion of 2-oxoglutarate to succinyl-CoA and CO(2). It contains multiple copies of three enzymatic components: 2-oxoglutarate dehydrogenase (E1), dihydrolipoamide succinyltransferase (E2) and lipoamide dehydrogenase (E3). The polypeptide is Dihydrolipoamide-residue succinyltransferase component of 2-oxoglutarate dehydrogenase complex (Solanum tuberosum (Potato)).